A 276-amino-acid chain; its full sequence is Diaminopimelate epimerase (276 aa).

Substrate-binding residues include Asn-13, Gln-46, and Asn-66. Cys-75 serves as the catalytic Proton donor. Substrate contacts are provided by residues 76-77 (GN), Asn-159, Asn-192, and 210-211 (ER). Cys-219 acts as the Proton acceptor in catalysis. Position 220–221 (220–221 (GS)) interacts with substrate.

It belongs to the diaminopimelate epimerase family. Homodimer.

It is found in the cytoplasm. The catalysed reaction is (2S,6S)-2,6-diaminopimelate = meso-2,6-diaminopimelate. It functions in the pathway amino-acid biosynthesis; L-lysine biosynthesis via DAP pathway; DL-2,6-diaminopimelate from LL-2,6-diaminopimelate: step 1/1. Its function is as follows. Catalyzes the stereoinversion of LL-2,6-diaminopimelate (L,L-DAP) to meso-diaminopimelate (meso-DAP), a precursor of L-lysine and an essential component of the bacterial peptidoglycan. The sequence is that of Diaminopimelate epimerase from Vibrio campbellii (strain ATCC BAA-1116).